Consider the following 387-residue polypeptide: 3-ketoacyl-CoA thiolase (387 aa).

The Acyl-thioester intermediate role is filled by Cys91. Residues His343 and Cys373 each act as proton acceptor in the active site.

Belongs to the thiolase-like superfamily. Thiolase family. In terms of assembly, heterotetramer of two alpha chains (FadB) and two beta chains (FadA).

The protein localises to the cytoplasm. The catalysed reaction is an acyl-CoA + acetyl-CoA = a 3-oxoacyl-CoA + CoA. The protein operates within lipid metabolism; fatty acid beta-oxidation. In terms of biological role, catalyzes the final step of fatty acid oxidation in which acetyl-CoA is released and the CoA ester of a fatty acid two carbons shorter is formed. The sequence is that of 3-ketoacyl-CoA thiolase from Shewanella sp. (strain W3-18-1).